A 270-amino-acid polypeptide reads, in one-letter code: Diaminopimelate epimerase (270 aa).

Residues asparagine 15, glutamine 49, and asparagine 66 each contribute to the substrate site. Cysteine 75 acts as the Proton donor in catalysis. Substrate-binding positions include 76–77 (GN), asparagine 155, asparagine 187, and 204–205 (ER). The active-site Proton acceptor is the cysteine 213. 214–215 (GS) contacts substrate.

The protein belongs to the diaminopimelate epimerase family. As to quaternary structure, homodimer.

Its subcellular location is the cytoplasm. It catalyses the reaction (2S,6S)-2,6-diaminopimelate = meso-2,6-diaminopimelate. The protein operates within amino-acid biosynthesis; L-lysine biosynthesis via DAP pathway; DL-2,6-diaminopimelate from LL-2,6-diaminopimelate: step 1/1. Catalyzes the stereoinversion of LL-2,6-diaminopimelate (L,L-DAP) to meso-diaminopimelate (meso-DAP), a precursor of L-lysine and an essential component of the bacterial peptidoglycan. The chain is Diaminopimelate epimerase from Rickettsia prowazekii (strain Madrid E).